Reading from the N-terminus, the 402-residue chain is GDSL esterase/lipase At1g20120 (402 aa).

The N-terminal stretch at 1 to 35 (MLQDRVSGSLSSSKISRCVLFLSLFCFFLLTMHAS) is a signal peptide. Positions 41-69 (RVPNPGPSPAPEPKPCPSPGPNPAPATTK) are disordered. Pro residues predominate over residues 44-64 (NPGPSPAPEPKPCPSPGPNPA). Asn73 is a glycosylation site (N-linked (GlcNAc...) asparagine). The active-site Nucleophile is the Ser85. N-linked (GlcNAc...) asparagine glycosylation is found at Asn314 and Asn367. Catalysis depends on residues Asp375 and His378.

The protein belongs to the 'GDSL' lipolytic enzyme family.

It localises to the secreted. The sequence is that of GDSL esterase/lipase At1g20120 from Arabidopsis thaliana (Mouse-ear cress).